We begin with the raw amino-acid sequence, 596 residues long: Serine/arginine (SR)-type shuttling mRNA binding protein (596 aa).

Polar residues predominate over residues 1–11; sequence MSEVEYNQENT. Disordered stretches follow at residues 1 to 83 and 244 to 279; these read MSEV…SRKS and DRED…FGPP. 2 stretches are compositionally biased toward basic and acidic residues: residues 12-23 and 42-66; these read HYAEVDNFDRDA and SDRR…RSFN. Positions 182-246 constitute an RRM 1 domain; that stretch reads FHRQPSIVYT…RQVFVREDRE (65 aa). Over residues 259 to 275 the composition is skewed to gly residues; that stretch reads PRGGGRGGLGGSSGRGS. The RRM 2 domain maps to 302–379; that stretch reads TQLFIGNLPF…RMLEVRLDKF (78 aa). The interval 458–478 is disordered; it reads GYSTRASGPTSARAPAPPAAP. The RRM 3 domain maps to 480–556; that stretch reads QQIFVKNLPW…RPLDIEFNRR (77 aa). Over residues 563–572 the composition is skewed to gly residues; the sequence is GGGSVNGGND. A disordered region spans residues 563–596; it reads GGGSVNGGNDGNAPMVEVSAQDDEDGDAPVPMQG.

It localises to the nucleus. Functionally, binds to intron-containing transcripts and is involved in quality control for the export of spliced mRNAs from the nucleus. Binds to pre-mRNAs until splicing is completed or until faulty mRNAs are degraded. The protein is Serine/arginine (SR)-type shuttling mRNA binding protein of Mycosarcoma maydis (Corn smut fungus).